Reading from the N-terminus, the 444-residue chain is Tubulin beta-8 chain (444 aa).

The MREI motif motif lies at 1 to 4 (MREI). GTP-binding residues include Gln11, Glu69, Ser138, Gly142, Thr143, and Gly144. Glu69 lines the Mg(2+) pocket. Phosphoserine; by CDK1 is present on Ser172. GTP contacts are provided by Asn204 and Asn226. The interval 423–444 (QQYQDATAEEEEDEEYAEEEVA) is disordered. Residues 429–444 (TAEEEEDEEYAEEEVA) are compositionally biased toward acidic residues. 5-glutamyl polyglutamate is present on Glu436.

Belongs to the tubulin family. As to quaternary structure, dimer of alpha and beta chains. A typical microtubule is a hollow water-filled tube with an outer diameter of 25 nm and an inner diameter of 15 nM. Alpha-beta heterodimers associate head-to-tail to form protofilaments running lengthwise along the microtubule wall with the beta-tubulin subunit facing the microtubule plus end conferring a structural polarity. Microtubules usually have 13 protofilaments but different protofilament numbers can be found in some organisms and specialized cells. Requires Mg(2+) as cofactor. Post-translationally, some glutamate residues at the C-terminus are polyglycylated, resulting in polyglycine chains on the gamma-carboxyl group. Glycylation is mainly limited to tubulin incorporated into axonemes (cilia and flagella) whereas glutamylation is prevalent in neuronal cells, centrioles, axonemes, and the mitotic spindle. Both modifications can coexist on the same protein on adjacent residues, and lowering polyglycylation levels increases polyglutamylation, and reciprocally. Cilia and flagella glycylation is required for their stability and maintenance. Flagella glycylation controls sperm motility. Some glutamate residues at the C-terminus are polyglutamylated, resulting in polyglutamate chains on the gamma-carboxyl group. Polyglutamylation plays a key role in microtubule severing by spastin (SPAST). SPAST preferentially recognizes and acts on microtubules decorated with short polyglutamate tails: severing activity by SPAST increases as the number of glutamates per tubulin rises from one to eight, but decreases beyond this glutamylation threshold. Glutamylation is also involved in cilia motility. In terms of processing, phosphorylated on Ser-172 by CDK1 during the cell cycle, from metaphase to telophase, but not in interphase. This phosphorylation inhibits tubulin incorporation into microtubules.

It is found in the cytoplasm. The protein resides in the cytoskeleton. Its subcellular location is the spindle. Tubulin is the major constituent of microtubules, a cylinder consisting of laterally associated linear protofilaments composed of alpha- and beta-tubulin heterodimers. Microtubules grow by the addition of GTP-tubulin dimers to the microtubule end, where a stabilizing cap forms. Below the cap, tubulin dimers are in GDP-bound state, owing to GTPase activity of alpha-tubulin. Has a key role in meiotic spindle assembly and oocyte maturation. This is Tubulin beta-8 chain (TUBB8) from Pan troglodytes (Chimpanzee).